Here is a 552-residue protein sequence, read N- to C-terminus: Urocanate hydratase (552 aa).

Residues Gly-48 to Gly-49, Gln-126, Gly-172 to Gly-174, Asp-192, Asn-238 to Ala-239, Gln-259 to His-263, Tyr-268 to Leu-269, and Tyr-317 each bind NAD(+). Cys-405 is a catalytic residue. Gly-487 provides a ligand contact to NAD(+).

This sequence belongs to the urocanase family. NAD(+) is required as a cofactor.

It is found in the cytoplasm. It carries out the reaction 4-imidazolone-5-propanoate = trans-urocanate + H2O. The protein operates within amino-acid degradation; L-histidine degradation into L-glutamate; N-formimidoyl-L-glutamate from L-histidine: step 2/3. Its function is as follows. Catalyzes the conversion of urocanate to 4-imidazolone-5-propionate. This is Urocanate hydratase from Streptomyces griseus subsp. griseus (strain JCM 4626 / CBS 651.72 / NBRC 13350 / KCC S-0626 / ISP 5235).